A 29-amino-acid chain; its full sequence is Trypsin inhibitor 4 (29 aa).

3 disulfide bridges follow: cysteine 3/cysteine 20, cysteine 10/cysteine 22, and cysteine 16/cysteine 28.

The protein belongs to the protease inhibitor I7 (squash-type serine protease inhibitor) family.

Its subcellular location is the secreted. Its function is as follows. Strongly inhibits trypsin, weakly inhibits chymotrypsin. The protein is Trypsin inhibitor 4 of Cyclanthera pedata (Achocha).